A 214-amino-acid chain; its full sequence is DELTA-actitoxin-Aeq1a (214 aa).

The first 19 residues, 1–19 (MSRLIIVFIVVTMICSATA), serve as a signal peptide directing secretion. Positions 20–35 (LPSKKIIDEDEEDEKR) are excised as a propeptide. The interval 38–47 (DVAGAVIDGA) is plays an important role in the hemolytic activity. The N-terminal region stretch occupies residues 46–65 (GASLSFDILKTVLEALGNVK). Phosphocholine-binding residues include serine 89, valine 122, serine 140, proline 142, tyrosine 168, tyrosine 172, and tyrosine 173. The segment at 140 to 155 (SVPYDYNWYSNWWNVR) is trp-rich region, which is important for the binding to lipid membrane. The Cell attachment site, crucial for protein stability signature appears at 179-181 (RGD).

The protein belongs to the actinoporin family. Sea anemone subfamily. As to quaternary structure, octamer or nonamer in membranes. Monomer in the soluble state.

It is found in the secreted. Its subcellular location is the nematocyst. The protein resides in the target cell membrane. Its function is as follows. Pore-forming protein that forms cations-selective hydrophilic pores of around 1 nm and causes cardiac stimulation and cytolysis. Pore formation is a multi-step process that involves specific recognition of membrane sphingomyelin (but neither cholesterol nor phosphatidylcholine) using aromatic rich region and adjacent phosphocholine (POC) binding site, firm binding to the membrane (mainly driven by hydrophobic interactions) accompanied by the transfer of the N-terminal region to the lipid-water interface and finally pore formation after oligomerization of monomers. Cytolytic effects include red blood cells hemolysis, platelet aggregation and lysis, cytotoxic and cytostatic effects on fibroblasts. Lethality in mammals has been ascribed to severe vasospasm of coronary vessels, cardiac arrhythmia, and inotropic effects. This chain is DELTA-actitoxin-Aeq1a, found in Actinia equina (Beadlet anemone).